Reading from the N-terminus, the 959-residue chain is MTQTLSQLEHSEAFIERHIGSSAQQQQQLLEAVGARSLNALIQQIVPADIQLPAPPPVGDAATEHQALAELKAIASQNQRYKSYIGMGYSAVLTPPVILRNMLENPGWYTAYTPYQPEVSQGRLEALLNFQTVTLDLTGLDLASASLLDEATAAAEAMALAKRASKLKDANRFFVADDVHPQTLDVVRTRAATFGFEVIVDKAEKVLELQGVFGVLLQQVGTTGELHDYSALLAELKNRKIGTSVAADIMALVLLTAPGKQGADVVFGSAQRFGVPMGYGGPHAAFFACRDEFKRSMPGRIIGVSRDAAGNTALRMAMQTREQHIRREKANSNICTSQVLLANIASLYAVYHGPQGLQRIAGRIHRLTDILAAGLQQAGLQLRHKTWFDTLTVEVKDKAAVLERALSFGINLRTDIHGAVGITLDEATSREDVQTLFALLAGDNHGLDIDALDAAVSKNSQSIPAGMLRKDPILTHPVFNSYHSETEMMRYMHRLERKDLALNQAMIPLGSCTMKLNAAAEMIPITWPEFSELHPFCPPEQAAGYKQMIGQLSQWLVQLTGYDAVCMQPNSGAQGEYAGLLAIRHYHESRNESGRHICLIPSSAHGTNPASAQMAGMSVVVVACDKNGNIDLHDLRVKAEQAGEELSCIMVTYPSTHGVYEETIREVCQIVHQFGGQVYLDGANMNAQVGITTPGYIGADVSHLNLHKTFCIPHGGGGPGMGPIGVKAHLAPFVPGHSVVQIDGVLTQQGAVSAAPFGSASILPISWMYIRMMGAEGLKQASQVAILNANYIATRLKDAYPVLYTGRDHRVAHECILDIRPLKEETGISEMDIAKRLIDYGFHAPTMSFPVAGTLMVEPTESESKVELDRFIDAMLAIRSEIDRVAKGEWPLEDNPLVNAPHIQAELVSDWQHAYSRELAVFPIAGVRENKYWPSVKRLDDVYGDRNLFCSCVPMSEYE.

Lys-708 is modified (N6-(pyridoxal phosphate)lysine).

The protein belongs to the GcvP family. In terms of assembly, the glycine cleavage system is composed of four proteins: P, T, L and H. It depends on pyridoxal 5'-phosphate as a cofactor.

The catalysed reaction is N(6)-[(R)-lipoyl]-L-lysyl-[glycine-cleavage complex H protein] + glycine + H(+) = N(6)-[(R)-S(8)-aminomethyldihydrolipoyl]-L-lysyl-[glycine-cleavage complex H protein] + CO2. The glycine cleavage system catalyzes the degradation of glycine. The P protein binds the alpha-amino group of glycine through its pyridoxal phosphate cofactor; CO(2) is released and the remaining methylamine moiety is then transferred to the lipoamide cofactor of the H protein. The chain is Glycine dehydrogenase (decarboxylating) from Serratia proteamaculans (strain 568).